The following is a 1935-amino-acid chain: Myosin-7 (1935 aa).

The Myosin N-terminal SH3-like domain maps to 32–81 (DLKKDVFVPDDKEEFVKAKIISREGGKITAETEHGKTVTVKEDQVLQQNP). Residues 85-778 (DKIEDMAMLT…LLGLLEEMRD (694 aa)) enclose the Myosin motor domain. K129 bears the N6,N6,N6-trimethyllysine mark. 178–185 (GESGAGKT) is a binding site for ATP. T378 bears the Phosphothreonine mark. Actin-binding regions lie at residues 655 to 677 (LNKLMTNLRSTHPHFVRCIIPNE) and 757 to 771 (RFGHTKVFFKAGLLG). Residues 781 to 810 (LSRIITRIQAQSRGVLARMEFKKLLERRDS) enclose the IQ domain. A coiled-coil region spans residues 839–1935 (LLKSAETEKE…DIGTKGLNEE (1097 aa)). 2 positions are modified to phosphoserine: S1137 and S1269. Residue T1282 is modified to Phosphothreonine. Y1308 carries the post-translational modification Phosphotyrosine. T1309 carries the post-translational modification Phosphothreonine. S1510 is subject to Phosphoserine. T1513 is subject to Phosphothreonine. Residues 1907-1935 (EERADIAESQVNKLRAKSRDIGTKGLNEE) are disordered. Residues 1923–1935 (KSRDIGTKGLNEE) show a composition bias toward basic and acidic residues.

Belongs to the TRAFAC class myosin-kinesin ATPase superfamily. Myosin family. As to quaternary structure, muscle myosin is a hexameric protein that consists of 2 heavy chain subunits (MHC), 2 alkali light chain subunits (MLC) and 2 regulatory light chain subunits (MLC-2). Interacts with ECPAS. Interacts (via C-terminus) with LRRC39.

Its subcellular location is the cytoplasm. It is found in the myofibril. The protein resides in the sarcomere. Myosins are actin-based motor molecules with ATPase activity essential for muscle contraction. Forms regular bipolar thick filaments that, together with actin thin filaments, constitute the fundamental contractile unit of skeletal and cardiac muscle. The chain is Myosin-7 (MYH7) from Equus caballus (Horse).